Reading from the N-terminus, the 400-residue chain is Nicotinate phosphoribosyltransferase (400 aa).

The residue at position 220 (His220) is a Phosphohistidine; by autocatalysis.

This sequence belongs to the NAPRTase family. Transiently phosphorylated on a His residue during the reaction cycle. Phosphorylation strongly increases the affinity for substrates and increases the rate of nicotinate D-ribonucleotide production. Dephosphorylation regenerates the low-affinity form of the enzyme, leading to product release.

The catalysed reaction is nicotinate + 5-phospho-alpha-D-ribose 1-diphosphate + ATP + H2O = nicotinate beta-D-ribonucleotide + ADP + phosphate + diphosphate. It participates in cofactor biosynthesis; NAD(+) biosynthesis; nicotinate D-ribonucleotide from nicotinate: step 1/1. Its function is as follows. Catalyzes the synthesis of beta-nicotinate D-ribonucleotide from nicotinate and 5-phospho-D-ribose 1-phosphate at the expense of ATP. The chain is Nicotinate phosphoribosyltransferase from Escherichia coli O127:H6 (strain E2348/69 / EPEC).